Consider the following 199-residue polypeptide: Protein-methionine-sulfoxide reductase heme-binding subunit MsrQ (199 aa).

The next 6 membrane-spanning stretches (helical) occupy residues 8–28 (IAWLKVFLHLAGFLPLVWLFW), 54–74 (FLLATLLVAPLARYAKQPLLI), 82–102 (LWCFAWATLHLTSYTLLELGI), 116–136 (PYLTLGMICWVILLALAATST), 149–169 (LLHNFVYLVAILAPIHYLWSV), and 171–191 (IVSPQPIIYALLAVVLLACRY).

It belongs to the MsrQ family. Heterodimer of a catalytic subunit (MsrP) and a heme-binding subunit (MsrQ). It depends on FMN as a cofactor. Requires heme b as cofactor.

The protein resides in the cell inner membrane. Functionally, part of the MsrPQ system that repairs oxidized periplasmic proteins containing methionine sulfoxide residues (Met-O), using respiratory chain electrons. Thus protects these proteins from oxidative-stress damage caused by reactive species of oxygen and chlorine generated by the host defense mechanisms. MsrPQ is essential for the maintenance of envelope integrity under bleach stress, rescuing a wide series of structurally unrelated periplasmic proteins from methionine oxidation. MsrQ provides electrons for reduction to the reductase catalytic subunit MsrP, using the quinone pool of the respiratory chain. This Klebsiella pneumoniae (strain 342) protein is Protein-methionine-sulfoxide reductase heme-binding subunit MsrQ.